The following is a 208-amino-acid chain: Thymidylate kinase (208 aa).

10–17 (GPEGSGKT) serves as a coordination point for ATP.

This sequence belongs to the thymidylate kinase family.

The enzyme catalyses dTMP + ATP = dTDP + ADP. Phosphorylation of dTMP to form dTDP in both de novo and salvage pathways of dTTP synthesis. This is Thymidylate kinase from Bacillus cereus (strain AH187).